The sequence spans 251 residues: Probable transcriptional regulatory protein cgR_1708 (251 aa).

The disordered stretch occupies residues 1 to 22 (MAGHSKWATTKHKKAANDAKRG).

Belongs to the TACO1 family.

It is found in the cytoplasm. The chain is Probable transcriptional regulatory protein cgR_1708 from Corynebacterium glutamicum (strain R).